Reading from the N-terminus, the 363-residue chain is Flagellar P-ring protein (363 aa).

Residues 1 to 20 (MKLKLILAVAMLAFSLPSQA) form the signal peptide.

It belongs to the FlgI family. The basal body constitutes a major portion of the flagellar organelle and consists of four rings (L,P,S, and M) mounted on a central rod.

The protein resides in the periplasm. Its subcellular location is the bacterial flagellum basal body. Assembles around the rod to form the L-ring and probably protects the motor/basal body from shearing forces during rotation. The polypeptide is Flagellar P-ring protein (Shewanella sp. (strain MR-7)).